We begin with the raw amino-acid sequence, 208 residues long: uncharacterized protein (208 aa).

Disordered regions lie at residues 91–115 (PGQAGSQEAADGKGRLPDITSPSQD), 127–156 (QSWSSGTSRPTCLAYRPRHLSPSSKPKRPG), and 182–208 (NKLGSSDDSDTDRFSSVTSGSSRRKFK). The segment covering 127–136 (QSWSSGTSRP) has biased composition (polar residues).

This is an uncharacterized protein from Rattus norvegicus (Rat).